Here is a 173-residue protein sequence, read N- to C-terminus: ATP synthase subunit b (173 aa).

Residues 15–35 (GVEWGTVIVQVLTFIVLLALL) form a helical membrane-spanning segment.

Belongs to the ATPase B chain family. In terms of assembly, F-type ATPases have 2 components, F(1) - the catalytic core - and F(0) - the membrane proton channel. F(1) has five subunits: alpha(3), beta(3), gamma(1), delta(1), epsilon(1). F(0) has three main subunits: a(1), b(2) and c(10-14). The alpha and beta chains form an alternating ring which encloses part of the gamma chain. F(1) is attached to F(0) by a central stalk formed by the gamma and epsilon chains, while a peripheral stalk is formed by the delta and b chains.

The protein localises to the cell membrane. Functionally, f(1)F(0) ATP synthase produces ATP from ADP in the presence of a proton or sodium gradient. F-type ATPases consist of two structural domains, F(1) containing the extramembraneous catalytic core and F(0) containing the membrane proton channel, linked together by a central stalk and a peripheral stalk. During catalysis, ATP synthesis in the catalytic domain of F(1) is coupled via a rotary mechanism of the central stalk subunits to proton translocation. Its function is as follows. Component of the F(0) channel, it forms part of the peripheral stalk, linking F(1) to F(0). In Staphylococcus aureus (strain MRSA252), this protein is ATP synthase subunit b.